A 142-amino-acid chain; its full sequence is uncharacterized protein (142 aa).

This is an uncharacterized protein from Mycobacterium tuberculosis (strain CDC 1551 / Oshkosh).